An 82-amino-acid polypeptide reads, in one-letter code: UPF0437 protein in nifX-nifW intergenic region (82 aa).

This sequence belongs to the UPF0437 family.

In Frankia alni, this protein is UPF0437 protein in nifX-nifW intergenic region.